We begin with the raw amino-acid sequence, 464 residues long: MAVYNYDVVVLGSGPAGEGAAMNAVKAGRKVAVVDNRPLVGGNCTHLGTIPSKALRHSVRQIMQYNTNPLFRQIGEPRWFSFPDVLKSAEKVISKQVTSRTSYYARNRIDTFFGTASFSDEQSVEVVCLNGMVEKLVANQFVIATGSRPYRPADIDFNHPRIYDSDTILTLSHTPRRMIIYGAGVIGCEYASIFSGLGVLVDLIDNREQLLSFLDDEISDALSYHLRNNNVLIRHNEEYERVEGLENGVILHLKSGKKIKADAFLWSNGRTGNTDKLGLENIGLKANSRGQVQVDEHYRTEIGNIYAAGDVIGWPSLASAAYDQGRSAAGSIVENDSWRFVDDVPTGIYTIPEISSIGKNERELTQAKIPYEVGKAFFKSMARAQISFEPVGMLKILFHRETLEVLGVHCFGYQASEIVHIGQAIMNQKGPANSIKYFVNTTFNYPTMAEAYRVAAFDGLNRLF.

Residue 35-44 (DNRPLVGGNC) coordinates FAD.

Belongs to the class-I pyridine nucleotide-disulfide oxidoreductase family. FAD serves as cofactor.

The protein localises to the cytoplasm. The enzyme catalyses NAD(+) + NADPH = NADH + NADP(+). Its function is as follows. Conversion of NADPH, generated by peripheral catabolic pathways, to NADH, which can enter the respiratory chain for energy generation. The polypeptide is Soluble pyridine nucleotide transhydrogenase (Stutzerimonas stutzeri (strain A1501) (Pseudomonas stutzeri)).